Reading from the N-terminus, the 248-residue chain is UPF0246 protein A1G_03985 (248 aa).

The protein belongs to the UPF0246 family.

The chain is UPF0246 protein A1G_03985 from Rickettsia rickettsii (strain Sheila Smith).